A 294-amino-acid polypeptide reads, in one-letter code: Shikimate dehydrogenase (NADP(+)) (294 aa).

Shikimate is bound by residues 22-24 (SLS) and S69. K73 functions as the Proton acceptor in the catalytic mechanism. Shikimate-binding residues include N94 and D111. NADP(+)-binding positions include 135-139 (GAGGA) and L236. A shikimate-binding site is contributed by Y238. G260 contributes to the NADP(+) binding site.

This sequence belongs to the shikimate dehydrogenase family. In terms of assembly, homodimer.

It carries out the reaction shikimate + NADP(+) = 3-dehydroshikimate + NADPH + H(+). The protein operates within metabolic intermediate biosynthesis; chorismate biosynthesis; chorismate from D-erythrose 4-phosphate and phosphoenolpyruvate: step 4/7. Involved in the biosynthesis of the chorismate, which leads to the biosynthesis of aromatic amino acids. Catalyzes the reversible NADPH linked reduction of 3-dehydroshikimate (DHSA) to yield shikimate (SA). This chain is Shikimate dehydrogenase (NADP(+)), found in Streptococcus equi subsp. zooepidemicus (strain H70).